An 892-amino-acid chain; its full sequence is Alanine--tRNA ligase (892 aa).

4 residues coordinate Zn(2+): H577, H581, C680, and H684.

The protein belongs to the class-II aminoacyl-tRNA synthetase family. It depends on Zn(2+) as a cofactor.

It is found in the cytoplasm. It catalyses the reaction tRNA(Ala) + L-alanine + ATP = L-alanyl-tRNA(Ala) + AMP + diphosphate. In terms of biological role, catalyzes the attachment of alanine to tRNA(Ala) in a two-step reaction: alanine is first activated by ATP to form Ala-AMP and then transferred to the acceptor end of tRNA(Ala). Also edits incorrectly charged Ser-tRNA(Ala) and Gly-tRNA(Ala) via its editing domain. The chain is Alanine--tRNA ligase from Paenarthrobacter aurescens (strain TC1).